A 247-amino-acid polypeptide reads, in one-letter code: tRNA pseudouridine synthase A (247 aa).

D53 acts as the Nucleophile in catalysis. Residue Y111 participates in substrate binding.

This sequence belongs to the tRNA pseudouridine synthase TruA family. As to quaternary structure, homodimer.

The catalysed reaction is uridine(38/39/40) in tRNA = pseudouridine(38/39/40) in tRNA. Its function is as follows. Formation of pseudouridine at positions 38, 39 and 40 in the anticodon stem and loop of transfer RNAs. The polypeptide is tRNA pseudouridine synthase A (Bacillus subtilis (strain 168)).